Reading from the N-terminus, the 357-residue chain is uncharacterized protein (357 aa).

The next 9 membrane-spanning stretches (helical) occupy residues 13–33, 44–64, 72–92, 148–168, 181–201, 203–223, 266–286, 293–313, and 327–347; these read PVTGIYNILLFNLFPLATYLV, IACTLLCSITVILAYRMCAVY, VSTFGLAYGFLIMMSLRTCFL, VLTYKSLGIRTAVYVGAFCFV, LPISANPWYIQVAFCVTSGFF, YLFINALYYLFAIIFVPLGIW, IALTGSKFLASCSCFFLSALF, SISGRCSPAFFFQLLIQPFLI, and YWVLIIEMLINGTYGMGVVLL.

It localises to the mitochondrion membrane. This is an uncharacterized protein from Schizosaccharomyces pombe (strain 972 / ATCC 24843) (Fission yeast).